A 421-amino-acid chain; its full sequence is Testin (421 aa).

The PET domain occupies 92 to 199 (MILTNPVPAK…GDVKLPSEMD (108 aa)). Residues 135–165 (QPVAGSEGAQYRKKQLAKQLPEHDQDPSKCH) are disordered. Residues 154–165 (LPEHDQDPSKCH) show a composition bias toward basic and acidic residues. 3 LIM zinc-binding domains span residues 234–297 (YSCY…CDSE), 299–359 (PRCA…NHAV), and 362–421 (QGCH…KMMS).

This sequence belongs to the prickle / espinas / testin family. As to quaternary structure, interacts via LIM domain 1 with ZYX. Interacts (via LIM domain 3) with ENAH and VASP. Interacts with ALKBH4, talin, actin, alpha-actinin, GRIP1 and PXN. Interacts (via LIM domain 2) with ACTL7A (via N-terminus). Heterodimer with ACTL7A; the heterodimer interacts with ENAH to form a heterotrimer.

It localises to the cytoplasm. It is found in the cell junction. Its subcellular location is the focal adhesion. Its function is as follows. Scaffold protein that may play a role in cell adhesion, cell spreading and in the reorganization of the actin cytoskeleton. Plays a role in the regulation of cell proliferation. May act as a tumor suppressor. In Dasypus novemcinctus (Nine-banded armadillo), this protein is Testin (TES).